The sequence spans 56 residues: UPF0391 membrane protein PSHAa0537 (56 aa).

The next 2 helical transmembrane spans lie at 6-26 (ITFL…IAGA) and 27-47 (AAGI…ISLV).

The protein belongs to the UPF0391 family.

The protein localises to the cell membrane. This chain is UPF0391 membrane protein PSHAa0537, found in Pseudoalteromonas translucida (strain TAC 125).